The following is a 440-amino-acid chain: Xylose isomerase (440 aa).

Active-site residues include His101 and Asp104. 7 residues coordinate Mg(2+): Glu232, Glu268, His271, Asp296, Asp307, Asp309, and Asp339.

This sequence belongs to the xylose isomerase family. Homotetramer. Mg(2+) is required as a cofactor.

The protein localises to the cytoplasm. The enzyme catalyses alpha-D-xylose = alpha-D-xylulofuranose. This Escherichia coli (strain SMS-3-5 / SECEC) protein is Xylose isomerase.